A 266-amino-acid chain; its full sequence is 3-oxoadipate enol-lactonase 1 (266 aa).

The AB hydrolase-1 domain maps to 28–250; sequence PAIVFSNSLG…DASHLSNIEQ (223 aa).

The catalysed reaction is (4,5-dihydro-5-oxofuran-2-yl)-acetate + H2O = 3-oxoadipate + H(+). It functions in the pathway aromatic compound metabolism; beta-ketoadipate pathway; 3-oxoadipate from 5-oxo-4,5-dihydro-2-furylacetate: step 1/1. The chain is 3-oxoadipate enol-lactonase 1 (pcaD) from Acinetobacter baylyi (strain ATCC 33305 / BD413 / ADP1).